Consider the following 1360-residue polypeptide: Zinc finger protein GLI1 (1360 aa).

A disordered region spans residues 198–245 (DTIGSKRLEDGSEGDISSPASVGTQDPLLGLLDGRDDLEKDDGKHEPE). The segment covering 230–245 (DGRDDLEKDDGKHEPE) has biased composition (basic and acidic residues). The C2H2-type 1 zinc finger occupies 250–275 (TNCHWESCTKEFDTQEHLVHHINNEH). Residues 298–306 (KAQYMLVVH) are interaction with DNA. 3 consecutive C2H2-type zinc fingers follow at residues 316-340 (HKCT…LRSH), 346-371 (YVCE…NRTH), and 377-402 (YVCK…KTVH). Interaction with DNA regions lie at residues 360-365 (ASDRAK) and 390-396 (DPSSLRK). 4 disordered regions span residues 390–434 (DPSS…NVKG), 457–500 (ITLK…SFED), 718–740 (IIHP…RTGG), and 1120–1213 (YMNY…IQPQ). The segment covering 461–473 (SQPSPGGQSSCSS) has biased composition (low complexity). The span at 474–496 (ERSPLGSTNNNDSGVEMNANTGG) shows a compositional bias: polar residues. The span at 1134 to 1143 (SPSSQDSQSS) shows a compositional bias: low complexity. Residues 1173-1190 (RQHSVSSQSTYMGSPNQL) are compositionally biased toward polar residues.

The protein belongs to the GLI C2H2-type zinc-finger protein family.

The protein localises to the cytoplasm. It is found in the nucleus. Its function is as follows. Acts as a transcriptional activator. Binds to the DNA consensus sequence 5'-GACCACCCA-3'. May regulate the transcription of specific genes during normal development. Mediates SHH signaling. Plays a role in cell proliferation and differentiation via its role in SHH signaling. The polypeptide is Zinc finger protein GLI1 (gli1) (Xenopus laevis (African clawed frog)).